Consider the following 820-residue polypeptide: Trimethylamine-N-oxide reductase (820 aa).

A signal peptide (tat-type signal) is located at residues 1 to 33 (MAITRRSFLKGVATTSAASVIGPSLLASASANA). Ser179 contacts Mo-bis(molybdopterin guanine dinucleotide).

This sequence belongs to the prokaryotic molybdopterin-containing oxidoreductase family. It depends on Mo-bis(molybdopterin guanine dinucleotide) as a cofactor. Predicted to be exported by the Tat system. The position of the signal peptide cleavage has not been experimentally proven.

It localises to the periplasm. The enzyme catalyses trimethylamine + 2 Fe(III)-[cytochrome c] + H2O = trimethylamine N-oxide + 2 Fe(II)-[cytochrome c] + 3 H(+). Reduces trimethylamine-N-oxide (TMAO) into trimethylamine; an anaerobic reaction coupled to energy-yielding reactions. The polypeptide is Trimethylamine-N-oxide reductase (torA) (Vibrio vulnificus (strain YJ016)).